The sequence spans 142 residues: Transcriptional regulator MraZ (142 aa).

SpoVT-AbrB domains follow at residues 5–47 (THTP…PAPE) and 76–119 (AHDE…DRVA).

Belongs to the MraZ family. In terms of assembly, forms oligomers.

It localises to the cytoplasm. The protein localises to the nucleoid. In Salinispora arenicola (strain CNS-205), this protein is Transcriptional regulator MraZ.